Here is a 354-residue protein sequence, read N- to C-terminus: MRVADFTFELPDSLIARHPLAERRSSRLLTLDGPTGALAHRQFTDLLEHLRPGDLMVFNNTRVIPARLFGQKASGGKLEILVERVLDSHRVLAHVRSSKSPKPGSSILIDGGGEAEMVARHDALFELRFAEEVLPLLERVGRMPLPPYIDRPDEGADRERYQTVYAQRAGAVAAPTAGLHFDQPLLEAIAAKGVETAFVTLHVGAGTFQPVRVEQIEDHHMHSEWLEVGQDVVDAVAACRARGGRVIAVGTTSVRSLESAARDGELKSFSGDTDIFIYPGRPFHVVDALVTNFHLPESTLLMLVSAFAGYPETMAAYAAAIEHGYRFFSYGDAMFITRNPAPTAPQESAPEDHA.

This sequence belongs to the QueA family. In terms of assembly, monomer.

The protein resides in the cytoplasm. The catalysed reaction is 7-aminomethyl-7-carbaguanosine(34) in tRNA + S-adenosyl-L-methionine = epoxyqueuosine(34) in tRNA + adenine + L-methionine + 2 H(+). It participates in tRNA modification; tRNA-queuosine biosynthesis. Its function is as follows. Transfers and isomerizes the ribose moiety from AdoMet to the 7-aminomethyl group of 7-deazaguanine (preQ1-tRNA) to give epoxyqueuosine (oQ-tRNA). In Pseudomonas syringae pv. syringae (strain B728a), this protein is S-adenosylmethionine:tRNA ribosyltransferase-isomerase.